We begin with the raw amino-acid sequence, 1827 residues long: Chromodomain-helicase-DNA-binding protein 2 (1827 aa).

A compositionally biased stretch (basic and acidic residues) spans 1–14 (MMRNKDKSQEEDSS). A disordered region spans residues 1-264 (MMRNKDKSQE…EQQDNSETIE (264 aa)). A compositionally biased stretch (low complexity) spans 15–75 (LHSNASSRSA…SESESAGSKS (61 aa)). 3 stretches are compositionally biased toward basic and acidic residues: residues 81–101 (EAKE…KMWE), 115–128 (SRQE…KEEA), and 146–155 (KKQEKWKQDP). Basic residues predominate over residues 175–204 (GKARRPVPRRTVPKPQVKKQPKIQRGKRKK). Phosphoserine is present on residues Ser-207 and Ser-208. Acidic residues predominate over residues 234-258 (EDDDFETDSDDLIEMTGEGGDEQQD). At Thr-240 the chain carries Phosphothreonine. Residue Ser-242 is modified to Phosphoserine. Chromo domains follow at residues 261 to 353 (ETIE…QWLG) and 378 to 456 (QIVE…IPTR). In terms of domain architecture, Helicase ATP-binding spans 496–666 (AHSWCKSNSV…WSLLHFIMPE (171 aa)). 509-516 (DEMGLGKT) is an ATP binding site. The short motif at 617 to 620 (DEAH) is the DEAH box element. A Helicase C-terminal domain is found at 795–946 (LLDKLLTRLR…HLVIQRMDTT (152 aa)). 4 disordered regions span residues 1030-1124 (EDEE…RSVR), 1329-1465 (GTVA…DDLD), 1556-1638 (HKKR…ADRG), and 1679-1827 (HMDA…VRKT). A compositionally biased stretch (basic and acidic residues) spans 1037 to 1065 (ERPHKDWDEIIPEEQRKKVEEEERQKELE). Phosphoserine occurs at positions 1085, 1087, 1365, and 1386. Residues 1347–1371 (KKENKAPRLKDEHGLEPASPRHSDN) show a composition bias toward basic and acidic residues. Basic and acidic residues-rich tracts occupy residues 1396 to 1431 (ENKE…KGGD) and 1565 to 1574 (EQKKKDDSLG). A CHD1 helical C-terminal domain (CHCT) region spans residues 1464–1566 (LDQETFSICK…KKRSQEEEEQ (103 aa)). Polar residues predominate over residues 1584–1601 (SGSSRDSLISQSHTSHNL). Composition is skewed to basic and acidic residues over residues 1697 to 1719 (RPYE…DRHH), 1738 to 1748 (QDFRRMSDHRP), 1759 to 1771 (DHYR…KLGE), and 1794 to 1813 (SPHD…RSLE). The residue at position 1806 (Ser-1806) is a Phosphoserine.

As to quaternary structure, interacts with MYOD1. Interacts with histone H3.3. As to expression, widely expressed.

The protein resides in the nucleus. It carries out the reaction ATP + H2O = ADP + phosphate + H(+). Its function is as follows. ATP-dependent chromatin-remodeling factor that specifically binds to the promoter of target genes, leading to chromatin remodeling, possibly by promoting deposition of histone H3.3. Involved in myogenesis via interaction with MYOD1: binds to myogenic gene regulatory sequences and mediates incorporation of histone H3.3 prior to the onset of myogenic gene expression, promoting their expression. In Mus musculus (Mouse), this protein is Chromodomain-helicase-DNA-binding protein 2 (Chd2).